Consider the following 41-residue polypeptide: MKIVKLITIFAMIATLMVTVTNGEAVFLTPDQIKAMIKRHG.

The signal sequence occupies residues 1–25 (MKIVKLITIFAMIATLMVTVTNGEA). His-40 bears the Histidine amide mark.

Expressed by the venom gland.

It is found in the secreted. Functionally, venom protein with unknown function. Does not induce paralysis when a high dose is administered by intrathoracic injection into the blowfly Lucilia caesar. In Tetramorium bicarinatum (Tramp ant), this protein is U15-myrmicitoxin-Tb1b.